We begin with the raw amino-acid sequence, 487 residues long: Glycogen synthase (487 aa).

Lys23 contributes to the ADP-alpha-D-glucose binding site.

Belongs to the glycosyltransferase 1 family. Bacterial/plant glycogen synthase subfamily.

It catalyses the reaction [(1-&gt;4)-alpha-D-glucosyl](n) + ADP-alpha-D-glucose = [(1-&gt;4)-alpha-D-glucosyl](n+1) + ADP + H(+). The protein operates within glycan biosynthesis; glycogen biosynthesis. In terms of biological role, synthesizes alpha-1,4-glucan chains using ADP-glucose. The polypeptide is Glycogen synthase (Pseudomonas fluorescens (strain Pf0-1)).